A 96-amino-acid polypeptide reads, in one-letter code: Ubiquitin-like protein NEDD8-like protein 1 (96 aa).

Residues 75 to 96 are disordered; sequence SQSDNSEKSEKSGKSEKDCILM. A compositionally biased stretch (basic and acidic residues) spans 79 to 96; it reads NSEKSEKSGKSEKDCILM.

The protein belongs to the ubiquitin family.

In Dictyostelium discoideum (Social amoeba), this protein is Ubiquitin-like protein NEDD8-like protein 1 (nedd8l1).